Here is a 198-residue protein sequence, read N- to C-terminus: NAD(P)H dehydrogenase (quinone) (198 aa).

Residues 4–189 (VLVLYYSMYG…SIARYQGEYV (186 aa)) enclose the Flavodoxin-like domain. FMN-binding positions include 10-15 (SMYGHI) and 78-80 (TRF). NAD(+) is bound at residue tyrosine 12. Substrate is bound at residue tryptophan 98. Residues 113–118 (STGTGG) and histidine 133 each bind FMN.

This sequence belongs to the WrbA family. Requires FMN as cofactor.

It carries out the reaction a quinone + NADH + H(+) = a quinol + NAD(+). The catalysed reaction is a quinone + NADPH + H(+) = a quinol + NADP(+). This Escherichia fergusonii (strain ATCC 35469 / DSM 13698 / CCUG 18766 / IAM 14443 / JCM 21226 / LMG 7866 / NBRC 102419 / NCTC 12128 / CDC 0568-73) protein is NAD(P)H dehydrogenase (quinone).